Here is a 394-residue protein sequence, read N- to C-terminus: Cystathionine gamma-lyase (394 aa).

The segment at 37–56 is disordered; the sequence is KQSSPANPIGTYEYSRSQNP. Substrate contacts are provided by Arg52, Tyr104, and Arg109. Lys204 is subject to N6-(pyridoxal phosphate)lysine. A substrate-binding site is contributed by Glu334. A Phosphoserine modification is found at Ser362.

It belongs to the trans-sulfuration enzymes family. As to quaternary structure, homotetramer. The cofactor is pyridoxal 5'-phosphate.

The protein resides in the cytoplasm. The catalysed reaction is L,L-cystathionine + H2O = 2-oxobutanoate + L-cysteine + NH4(+). It functions in the pathway amino-acid biosynthesis; L-cysteine biosynthesis; L-cysteine from L-homocysteine and L-serine: step 2/2. Its function is as follows. Catalyzes the production of cysteine from cystathionine in the reverse transsulfuration pathway for the biosynthesis of sulfur-containing amino acids cysteine and methionine. In this pathway, homocysteine sulfur is converted to cysteine sulfur. Also has cystathionine beta-lyase and cystathionine gamma-synthase activities in vitro. Cystathionine beta-lyase may be physiological, while cystathionine gamma-synthase activity is not, as the required substrate O-succinyl-L-homoserine(OSH) does not occur naturally in S.cerevisiae. This Saccharomyces cerevisiae (strain ATCC 204508 / S288c) (Baker's yeast) protein is Cystathionine gamma-lyase.